Consider the following 201-residue polypeptide: uncharacterized protein (201 aa).

Residues 121–141 (HHRTRPGRGPGPRPGGSAMAG) are disordered.

This is an uncharacterized protein from Mycobacterium tuberculosis (strain ATCC 25618 / H37Rv).